The sequence spans 279 residues: MAIRKLAPVTPGTRFASYAGFDEITKSTPEKSLLVPIKRTGGRNSTGRVTSRHMGGGHKRFYRIIDFKRNKDNVPAKVAAIEYDPNRSARIALLHYVDGEKRYILAPKNLKVGDRIESGEKVDIKVGNTMPLKNIPIGSDVHNIELKIGKGGQIARSAGAYAVLAAREGNYATLKMPSGEIRKVRIECRATIGVIGNAEHENISLGKAGRSRWLGIRPQTRGMAMNPVDHPMGGGEGKSKSGGGRKHPKSPWGQLAKGLKTRNKKKASTKLIVRGRKAK.

Positions 223–279 (MAMNPVDHPMGGGEGKSKSGGGRKHPKSPWGQLAKGLKTRNKKKASTKLIVRGRKAK) are disordered. A compositionally biased stretch (gly residues) spans 232–242 (MGGGEGKSKSG). Residues 259–279 (LKTRNKKKASTKLIVRGRKAK) show a composition bias toward basic residues.

It belongs to the universal ribosomal protein uL2 family. As to quaternary structure, part of the 50S ribosomal subunit. Forms a bridge to the 30S subunit in the 70S ribosome.

In terms of biological role, one of the primary rRNA binding proteins. Required for association of the 30S and 50S subunits to form the 70S ribosome, for tRNA binding and peptide bond formation. It has been suggested to have peptidyltransferase activity; this is somewhat controversial. Makes several contacts with the 16S rRNA in the 70S ribosome. The chain is Large ribosomal subunit protein uL2 from Chlorobaculum tepidum (strain ATCC 49652 / DSM 12025 / NBRC 103806 / TLS) (Chlorobium tepidum).